A 336-amino-acid polypeptide reads, in one-letter code: tRNA(Ile)-lysidine synthase (336 aa).

Serine 40 to serine 45 is a binding site for ATP.

It belongs to the tRNA(Ile)-lysidine synthase family.

The protein localises to the cytoplasm. It carries out the reaction cytidine(34) in tRNA(Ile2) + L-lysine + ATP = lysidine(34) in tRNA(Ile2) + AMP + diphosphate + H(+). Functionally, ligates lysine onto the cytidine present at position 34 of the AUA codon-specific tRNA(Ile) that contains the anticodon CAU, in an ATP-dependent manner. Cytidine is converted to lysidine, thus changing the amino acid specificity of the tRNA from methionine to isoleucine. The polypeptide is tRNA(Ile)-lysidine synthase (Prochlorococcus marinus (strain SARG / CCMP1375 / SS120)).